A 145-amino-acid polypeptide reads, in one-letter code: MVNLKIKKIDDAAILPECAHEGDAGLDLFSVEEKVIKAGESALIGTGIQMELPPETEAQVRPRSGLALKHSITVLNSPGTIDEGYRGEVKIILINHGKEDFKVEKSMKIAQMVIKPVLKVKVEEVKELSSSDRGTGGFGSTGLKK.

Residues 63–65 (RSG), N76, 80–82 (TID), and K90 contribute to the substrate site.

This sequence belongs to the dUTPase family. Mg(2+) is required as a cofactor.

The catalysed reaction is dUTP + H2O = dUMP + diphosphate + H(+). It functions in the pathway pyrimidine metabolism; dUMP biosynthesis; dUMP from dCTP (dUTP route): step 2/2. In terms of biological role, this enzyme is involved in nucleotide metabolism: it produces dUMP, the immediate precursor of thymidine nucleotides and it decreases the intracellular concentration of dUTP so that uracil cannot be incorporated into DNA. The polypeptide is Deoxyuridine 5'-triphosphate nucleotidohydrolase (Clostridium acetobutylicum (strain ATCC 824 / DSM 792 / JCM 1419 / IAM 19013 / LMG 5710 / NBRC 13948 / NRRL B-527 / VKM B-1787 / 2291 / W)).